A 376-amino-acid polypeptide reads, in one-letter code: MVATGRIIITLLAAALDEIILASKITQEAYDSDFSSPRYALTGSLAESVYGKQCYGDCVNYTCVVSRTGSLDPCLYTTKSIRIVHPAAKVLQKRETFCRSACITDDTVPWCIIDRYGTVDLCEPIKPNRKQPSLAVELSVDGKHPTGRTTTCSTRCKYRPSNEGSIGHRCVVRNGMNYAEWACSPNPVIMPPAIPTYNNAGSLDGLTECNLKTGLRIGLTIGDNEYSDSTNVSSGIAVLDYDGAVISIMTAYKQYITYVDAKEKPLTTLGILNTADDVGTKMVVYAMARVTAESVESLHKSLLNVLGDYSLPNGFGRFQRGLSGWLIGGHKYRNIEIKMLIHRRENNTEVEAISVDLKFRHGRYRLMNSCKGLIIL.

An N-terminal signal peptide occupies residues 1 to 22; sequence MVATGRIIITLLAAALDEIILA.

This sequence belongs to the ascovirus HvAV ORF17 family.

This is an uncharacterized protein from Heliothis virescens ascovirus 3e (HvAV-3e).